The primary structure comprises 357 residues: MSAFEKPQIISHIQKSLSYTVFDCKWMPCSAKFVTMGNFARGTGVIQLYEIQQGDLKLLREIEKAKPIKCGTFGATSLQQRYLATGDFAGNLHIWNLEAPEVPVYSVKGHKEIINTIDGVGGLGIGEGAPEIVTGSRDGTVKVWDPRQKDDPVANMEPVQGENKRDCWTVAFGNAYNQEERVVCAGYDNGDIKLFDLRNMSLRWETNIKNGVCSLEFDRKDISMNKLVATSLEGKFHVFDMRTQHPTKGFASVSEKAHKSTVWQVRHLPQNREVFLTAGGAGSLHLWKYEYPIQRSKKDSEGVEMGVAGSVSLLQNVTLSTQPVSSLDWSPDKRGLCICSSFDQMVRVLIVTKLHKI.

WD repeat units follow at residues E63–Y105, N115–A154, E162–E205, N207–G249, A257–K297, and L319–I357.

In terms of assembly, component of the PAQosome complex which is responsible for the biogenesis of several protein complexes and which consists of R2TP complex members RUVBL1, RUVBL2, RPAP3 and PIH1D1, URI complex members PFDN2, PFDN6, PDRG1, UXT and URI1 as well as ASDURF, POLR2E and DNAAF10/WDR92. Interacts with PIH1D1; the interaction associates DNAAF10 with the R2TP complex. Interacts with several dynein axonemal assembly factors.

It localises to the dynein axonemal particle. Functionally, key assembly factor specifically required for the stability of axonemal dynein heavy chains in cytoplasm. This is Dynein axonemal assembly factor 10 (DNAAF10) from Bos taurus (Bovine).